The primary structure comprises 257 residues: Zinc transporter ZupT (257 aa).

A run of 5 helical transmembrane segments spans residues 5–25, 32–52, 61–81, 109–129, and 137–157; these read LILT…AVLG, VLAF…LMEM, GMSP…YFGL, AILL…ATFV, and LGMG…LAVA. Asn-120 and Glu-123 together coordinate Fe(2+). Glu-123 and His-148 together coordinate Zn(2+). Residues Asn-149, Glu-152, and Glu-181 each coordinate Fe(2+). Zn(2+) is bound at residue Glu-152. The next 3 helical transmembrane spans lie at 182–202, 203–223, and 236–256; these read ILGG…VVMA, AVMA…LMPL, and GVLC…TAGI.

Belongs to the ZIP transporter (TC 2.A.5) family. ZupT subfamily.

The protein localises to the cell inner membrane. It carries out the reaction Zn(2+)(in) = Zn(2+)(out). Its function is as follows. Mediates zinc uptake. May also transport other divalent cations. In Escherichia fergusonii (strain ATCC 35469 / DSM 13698 / CCUG 18766 / IAM 14443 / JCM 21226 / LMG 7866 / NBRC 102419 / NCTC 12128 / CDC 0568-73), this protein is Zinc transporter ZupT.